The chain runs to 475 residues: Neuronal acetylcholine receptor subunit alpha-5 (475 aa).

A signal peptide spans 1–29; sequence MAAPGWGRWVLGLGPLLLQVFLPFQLVAG. Over 30 to 261 the chain is Extracellular; it reads RWGPEGAGGG…VIKRLPLFYT (232 aa). Cys177 and Cys191 are joined by a disulfide. Asn190 and Asn236 each carry an N-linked (GlcNAc...) asparagine glycan. A disulfide bridge connects residues Cys241 and Cys242. A run of 3 helical transmembrane segments spans residues 262 to 282, 289 to 309, and 324 to 344; these read LFLIIPCIGLSFLTVLVFYLP, ICLCTSVLVSLTVFLLVIEEI, and LVFTMIFVTLSIMVTVFAINI. Over 345-437 the chain is Cytoplasmic; it reads HHRSSSTHDA…KFIAQVLDRM (93 aa). A helical transmembrane segment spans residues 438-458; the sequence is FLWTFLLVSVVGSLGLFVPVI. The Extracellular portion of the chain corresponds to 459-475; the sequence is YKWANIIVPIHIGNENK.

The protein belongs to the ligand-gated ion channel (TC 1.A.9) family. Acetylcholine receptor (TC 1.A.9.1) subfamily. Alpha-5/CHRNA5 sub-subfamily. In terms of assembly, neuronal AChR that forms heteropentamers composed of two different type of subunits: alpha and non-alpha (beta). CHRNA5/alpha-5 subunit is only able to form functional nAChRs when co-assembled with another alpha subunit, can be combined to CHRNA4/alpha-4 or CHRNA3/alpha-3 and CHRNB4/beta-4 or CHRNB2/beta-2 to give rise to functional receptors. Interacts with LYPD6.

The protein resides in the synaptic cell membrane. The protein localises to the cell membrane. The enzyme catalyses Ca(2+)(in) = Ca(2+)(out). It carries out the reaction K(+)(in) = K(+)(out). The catalysed reaction is Na(+)(in) = Na(+)(out). Activated by a myriad of ligands such as acetylcholine, cytisine, nicotine, choline and epibatidine. Functionally, component of neuronal acetylcholine receptors (nAChRs) that function as pentameric, ligand-gated cation channels with high calcium permeability among other activities. nAChRs are excitatory neurotrasnmitter receptors formed by a collection of nAChR subunits known to mediate synaptic transmission in the nervous system and the neuromuscular junction. Each nAchR subunit confers differential attributes to channel properties, including activation, deactivation and desensitization kinetics, pH sensitivity, cation permeability, and binding to allosteric modulators. Has an accessory rather than functional role and is only able to form functional nAChRs when co-assembled with another beta subunit. Participates in pentameric assemblies along with CHRNA3, CHRNA4, CHRNB2 and CHRNB4. Increases receptor sensitivity to acetylcholine and nicotine when associated with CHRNA4 and CHRNB2. Plays a role in nicotine addiction. This Bos taurus (Bovine) protein is Neuronal acetylcholine receptor subunit alpha-5 (CHRNA5).